The primary structure comprises 234 residues: HTH-type transcriptional regulator ArcR (234 aa).

40–129 (VRHYTKGQVI…MAFLCKANDD (90 aa)) contacts a nucleoside 3',5'-cyclic phosphate. Residues 155 to 228 (KFAKDRIIKL…HKNWLVSKHL (74 aa)) enclose the HTH crp-type domain. The H-T-H motif DNA-binding region spans 188–207 (IQLMSDMAGISRETAGHIIH).

Its subcellular location is the cytoplasm. Its function is as follows. Positively regulates the expression of the arcABDCR operon under anaerobic conditions, thus playing an essential role in arginine catabolism. May also control the expression of genes encoding proteins which are involved in anaerobic metabolism. Can bind cyclic AMP. In Staphylococcus aureus (strain MSSA476), this protein is HTH-type transcriptional regulator ArcR (arcR).